Here is a 548-residue protein sequence, read N- to C-terminus: MAELTISAADIQGAIEDYVANFATDTEREEIGTVIDAGDGIAHVEGLPSVMTQELLEFPGGVLGVALNLDEHSIGAVILGDFEKIEEGQQVKRTGEVLSVPVGDGYLGRVVNPLGQPIDGRGEIETTDRRALELQAPSVVQRQGVSEPLQTGIKAIDSQTPIGRGQRQLIIGDRKTGKTAVCVDTILNQRQNWETGDPNQQVRCVYVAIGQKGTTIASVRRTLEEGGAMDYTTIVAAPASDSAGFKWLAPYTGSAIAQHWMYDGKHVLIVFDDLTKHAEAYRAISLLLRRPPGREAFPGDVFYLHSRLLERCAKLSDELGGGSMTGLPLIETKANDISAYIPTNVISITDGQCFLETDLFNQGVRPAINVGVSVSRVGGAAQIKAMKEVAGSLRLDLSQYRELESFAAFASDLDATSKAQLDRGARLVELLKQPQNSPMPVEEQVVAIFLGTRGHLDTVPVEDVQRFEQELLEHVRSSKEEIFTEIRESKKLSDELEKTLTDVVNEFKKGFETTSGESVVPDENVEAMSEDDVEKESVKVRKPAPKKK.

An ATP-binding site is contributed by 172-179; sequence GDRKTGKT. Positions 511–548 are disordered; sequence FETTSGESVVPDENVEAMSEDDVEKESVKVRKPAPKKK. Residues 523-534 are compositionally biased toward acidic residues; that stretch reads ENVEAMSEDDVE.

Belongs to the ATPase alpha/beta chains family. F-type ATPases have 2 components, CF(1) - the catalytic core - and CF(0) - the membrane proton channel. CF(1) has five subunits: alpha(3), beta(3), gamma(1), delta(1), epsilon(1). CF(0) has three main subunits: a(1), b(2) and c(9-12). The alpha and beta chains form an alternating ring which encloses part of the gamma chain. CF(1) is attached to CF(0) by a central stalk formed by the gamma and epsilon chains, while a peripheral stalk is formed by the delta and b chains.

The protein localises to the cell membrane. It carries out the reaction ATP + H2O + 4 H(+)(in) = ADP + phosphate + 5 H(+)(out). Its function is as follows. Produces ATP from ADP in the presence of a proton gradient across the membrane. The alpha chain is a regulatory subunit. This Mycobacterium sp. (strain JLS) protein is ATP synthase subunit alpha.